The sequence spans 197 residues: Imidazoleglycerol-phosphate dehydratase (197 aa).

The protein belongs to the imidazoleglycerol-phosphate dehydratase family.

It localises to the cytoplasm. The enzyme catalyses D-erythro-1-(imidazol-4-yl)glycerol 3-phosphate = 3-(imidazol-4-yl)-2-oxopropyl phosphate + H2O. It participates in amino-acid biosynthesis; L-histidine biosynthesis; L-histidine from 5-phospho-alpha-D-ribose 1-diphosphate: step 6/9. This Saccharophagus degradans (strain 2-40 / ATCC 43961 / DSM 17024) protein is Imidazoleglycerol-phosphate dehydratase.